The sequence spans 460 residues: Phosphoglucosamine mutase (460 aa).

Residue serine 102 is the Phosphoserine intermediate of the active site. Positions 102, 241, 243, and 245 each coordinate Mg(2+). Serine 102 bears the Phosphoserine mark.

The protein belongs to the phosphohexose mutase family. The cofactor is Mg(2+). In terms of processing, activated by phosphorylation.

It catalyses the reaction alpha-D-glucosamine 1-phosphate = D-glucosamine 6-phosphate. Catalyzes the conversion of glucosamine-6-phosphate to glucosamine-1-phosphate. This chain is Phosphoglucosamine mutase, found in Verminephrobacter eiseniae (strain EF01-2).